The sequence spans 329 residues: Ribose-phosphate pyrophosphokinase B (329 aa).

Mg(2+) contacts are provided by Asp-131, His-133, and Glu-146. The interval 227–242 is binding of phosphoribosylpyrophosphate; it reads TGKIAIIIDDIADTCK.

It belongs to the ribose-phosphate pyrophosphokinase family. Mg(2+) serves as cofactor.

Its subcellular location is the cytoplasm. It carries out the reaction D-ribose 5-phosphate + ATP = 5-phospho-alpha-D-ribose 1-diphosphate + AMP + H(+). It functions in the pathway metabolic intermediate biosynthesis; 5-phospho-alpha-D-ribose 1-diphosphate biosynthesis; 5-phospho-alpha-D-ribose 1-diphosphate from D-ribose 5-phosphate (route I): step 1/1. The protein is Ribose-phosphate pyrophosphokinase B (prsB) of Dictyostelium discoideum (Social amoeba).